A 68-amino-acid polypeptide reads, in one-letter code: Conotoxin Lt5.2 (68 aa).

Positions Met-1 to Pro-19 are cleaved as a signal peptide. A propeptide spanning residues Lys-20–Ala-54 is cleaved from the precursor.

This sequence belongs to the conotoxin T superfamily. In terms of processing, contains 2 disulfide bonds that can be either 'C1-C3, C2-C4' or 'C1-C4, C2-C3', since these disulfide connectivities have been observed for conotoxins with cysteine framework V (for examples, see AC P0DQQ7 and AC P81755). Expressed by the venom duct.

It is found in the secreted. This is Conotoxin Lt5.2 from Conus litteratus (Lettered cone).